We begin with the raw amino-acid sequence, 597 residues long: Aspartate--tRNA(Asp/Asn) ligase (597 aa).

Residue Glu175 participates in L-aspartate binding. An aspartate region spans residues 199–202 (QLFK). Position 221 (Arg221) interacts with L-aspartate. ATP contacts are provided by residues 221–223 (RDE) and Gln230. An L-aspartate-binding site is contributed by His453. Position 487 (Glu487) interacts with ATP. Arg494 is an L-aspartate binding site. Residue 539–542 (GWDR) participates in ATP binding. The segment at 562–597 (SGGGVDPLTDAPAPITPEQRKESGIDAKPKKKETKN) is disordered. The span at 579–589 (EQRKESGIDAK) shows a compositional bias: basic and acidic residues.

Belongs to the class-II aminoacyl-tRNA synthetase family. Type 1 subfamily. As to quaternary structure, homodimer.

It localises to the cytoplasm. The catalysed reaction is tRNA(Asx) + L-aspartate + ATP = L-aspartyl-tRNA(Asx) + AMP + diphosphate. Aspartyl-tRNA synthetase with relaxed tRNA specificity since it is able to aspartylate not only its cognate tRNA(Asp) but also tRNA(Asn). Reaction proceeds in two steps: L-aspartate is first activated by ATP to form Asp-AMP and then transferred to the acceptor end of tRNA(Asp/Asn). This is Aspartate--tRNA(Asp/Asn) ligase from Corynebacterium kroppenstedtii (strain DSM 44385 / JCM 11950 / CIP 105744 / CCUG 35717).